The sequence spans 359 residues: Phosphoserine aminotransferase (359 aa).

L-glutamate is bound at residue Arg-41. Pyridoxal 5'-phosphate-binding positions include 75-76 (AS), Trp-101, Thr-152, Asp-171, and Gln-194. Position 195 is an N6-(pyridoxal phosphate)lysine (Lys-195). Pyridoxal 5'-phosphate is bound at residue 236–237 (NT).

This sequence belongs to the class-V pyridoxal-phosphate-dependent aminotransferase family. SerC subfamily. As to quaternary structure, homodimer. Pyridoxal 5'-phosphate serves as cofactor.

Its subcellular location is the cytoplasm. The enzyme catalyses O-phospho-L-serine + 2-oxoglutarate = 3-phosphooxypyruvate + L-glutamate. The catalysed reaction is 4-(phosphooxy)-L-threonine + 2-oxoglutarate = (R)-3-hydroxy-2-oxo-4-phosphooxybutanoate + L-glutamate. Its pathway is amino-acid biosynthesis; L-serine biosynthesis; L-serine from 3-phospho-D-glycerate: step 2/3. It functions in the pathway cofactor biosynthesis; pyridoxine 5'-phosphate biosynthesis; pyridoxine 5'-phosphate from D-erythrose 4-phosphate: step 3/5. In terms of biological role, catalyzes the reversible conversion of 3-phosphohydroxypyruvate to phosphoserine and of 3-hydroxy-2-oxo-4-phosphonooxybutanoate to phosphohydroxythreonine. The chain is Phosphoserine aminotransferase from Acinetobacter baumannii (strain AB307-0294).